Here is a 126-residue protein sequence, read N- to C-terminus: Alpha-lactalbumin (126 aa).

In terms of domain architecture, C-type lysozyme spans 1–126 (RIFQICELSR…CNSDLDQWKC (126 aa)). Disulfide bonds link cysteine 6/cysteine 126, cysteine 30/cysteine 117, cysteine 63/cysteine 82, and cysteine 78/cysteine 96. The N-linked (GlcNAc...) asparagine glycan is linked to asparagine 47. The Ca(2+) site is built by lysine 84, aspartate 87, aspartate 89, aspartate 92, and aspartate 93.

It belongs to the glycosyl hydrolase 22 family. In terms of assembly, lactose synthase (LS) is a heterodimer of a catalytic component, beta1,4-galactosyltransferase (beta4Gal-T1) and a regulatory component, alpha-lactalbumin (LA). As to expression, mammary gland specific. Secreted in milk.

The protein resides in the secreted. Its function is as follows. Regulatory subunit of lactose synthase, changes the substrate specificity of galactosyltransferase in the mammary gland making glucose a good acceptor substrate for this enzyme. This enables LS to synthesize lactose, the major carbohydrate component of milk. In other tissues, galactosyltransferase transfers galactose onto the N-acetylglucosamine of the oligosaccharide chains in glycoproteins. This chain is Alpha-lactalbumin (LALBA), found in Ornithorhynchus anatinus (Duckbill platypus).